We begin with the raw amino-acid sequence, 262 residues long: MTTRYKVVLAYDGTNFAGFQRQPHQRTVEQVVTKAVNKMAKDPVEPIVIYGAGRTDAGVHAFGQTLHFDLPYEINPEGVRRGLNSMLPMDTIVKAVSIVPNDFHARYDTVGKRYWYRAYQNEFVDPFKRHYTGHFKFAADIDRIQQAIGDLEGRHDFSTFVASGSQAHDHVREIYSAKAWALPDEREIQFEFCGSGFLYNQVRIMVAVLMEIGQGRRAVDCIPALLAAKDREQARGTAPAAGLYMKKVYYEQNELQADLIKY.

Asp-56 (nucleophile) is an active-site residue. Position 114 (Tyr-114) interacts with substrate.

The protein belongs to the tRNA pseudouridine synthase TruA family. As to quaternary structure, homodimer.

The enzyme catalyses uridine(38/39/40) in tRNA = pseudouridine(38/39/40) in tRNA. In terms of biological role, formation of pseudouridine at positions 38, 39 and 40 in the anticodon stem and loop of transfer RNAs. This is tRNA pseudouridine synthase A from Lactiplantibacillus plantarum (strain ATCC BAA-793 / NCIMB 8826 / WCFS1) (Lactobacillus plantarum).